The primary structure comprises 380 residues: mRNA cap guanine-N(7) methyltransferase (380 aa).

An mRNA cap 0 methyltransferase domain is found at 24-333; sequence SRIFFMRNMN…MYLVFGFRKK (310 aa). 33–34 contacts mRNA; the sequence is NN. Residues Lys37, Ala62, Asp84, Asp117, Gln139, and Tyr144 each contribute to the S-adenosyl-L-methionine site. Residues 336–380 are disordered; the sequence is EAEKTEEEPATTKPVAESESEQKEVTESEEKEDQEDCEHQEAQTN.

This sequence belongs to the class I-like SAM-binding methyltransferase superfamily. mRNA cap 0 methyltransferase family.

It localises to the nucleus. It catalyses the reaction a 5'-end (5'-triphosphoguanosine)-ribonucleoside in mRNA + S-adenosyl-L-methionine = a 5'-end (N(7)-methyl 5'-triphosphoguanosine)-ribonucleoside in mRNA + S-adenosyl-L-homocysteine. Functionally, mRNA-capping methyltransferase that methylates the N7 position of the added guanosine to the 5'-cap structure of mRNAs. Binds RNA containing 5'-terminal GpppC. This Caenorhabditis elegans protein is mRNA cap guanine-N(7) methyltransferase (tag-72).